The following is a 268-amino-acid chain: MERYENLFAQLKDRKEGAFVPFVTLGDPSVEQSLNIIDTLIEAGADALELGIPFSDPLADGPTIQEATLRAFAAGVTPTQCFEMLALIRQKHPTIPIGLLMYANLVFSKGIDEFYAQCEKVGVDSVLVADVPVEESAPFRQAALRYNVAPIFICPPNADDDLLRQIASYGRGYTYLLSRAGVTGAENRAALPLHHLVEKLQEYNAAPPLQGFGISSPEQVTGAIEAGAAGAISGSAIVKLIEKNVANPGQMLTELKAFVTAMKAATRA.

Catalysis depends on proton acceptor residues Glu49 and Asp60.

Belongs to the TrpA family. Tetramer of two alpha and two beta chains.

It carries out the reaction (1S,2R)-1-C-(indol-3-yl)glycerol 3-phosphate + L-serine = D-glyceraldehyde 3-phosphate + L-tryptophan + H2O. Its pathway is amino-acid biosynthesis; L-tryptophan biosynthesis; L-tryptophan from chorismate: step 5/5. Functionally, the alpha subunit is responsible for the aldol cleavage of indoleglycerol phosphate to indole and glyceraldehyde 3-phosphate. This Citrobacter koseri (strain ATCC BAA-895 / CDC 4225-83 / SGSC4696) protein is Tryptophan synthase alpha chain.